Consider the following 452-residue polypeptide: COBRA-like protein 1 (452 aa).

The first 33 residues, 1–33, serve as a signal peptide directing secretion; sequence MGFFLCSSSSIFFKFGISIIFLVSFSGLTPSEA. N-linked (GlcNAc...) asparagine glycosylation is found at Asn42, Asn167, Asn175, Asn214, Asn239, Asn254, Asn323, Asn338, and Asn357. Ser432 is lipidated: GPI-anchor amidated serine. A propeptide spans 433 to 452 (removed in mature form); sequence VGSLFAAMALLLIVFLHGNL.

It belongs to the COBRA family. As to expression, expressed in roots, stems, leaves, flowers and siliques.

The protein resides in the cell membrane. This Arabidopsis thaliana (Mouse-ear cress) protein is COBRA-like protein 1 (COBL1).